The primary structure comprises 256 residues: MLPKELVRFKELGNQITILTAWDSLSSAIVEAAGADVVLVGDSLAMFIHGHTTTLPVTLEQMLHHTQAVGRGFLSPKNKQPLVVCDLPFLSYQCGEDKAVAAAGTLLKNSCAAAVKIEGAEPEVISVIERLIRMGIPVMGHLGLTPQSVNNLGYHRQAEDALGQEKLVTQALKIEQVGCFSVVLEHVPSKVASKVTQMLKIPVIGIGAGEECDGQVRVTADLLGLTDKQPPFAKPLIDGRSLFIESLTSWVDQLRN.

Positions 42 and 86 each coordinate Mg(2+). Residues 42 to 43, Asp-86, and Lys-116 each bind 3-methyl-2-oxobutanoate; that span reads DS. Mg(2+) is bound at residue Glu-118. The active-site Proton acceptor is the Glu-185.

The protein belongs to the PanB family. Homodecamer; pentamer of dimers. It depends on Mg(2+) as a cofactor.

Its subcellular location is the cytoplasm. It carries out the reaction 3-methyl-2-oxobutanoate + (6R)-5,10-methylene-5,6,7,8-tetrahydrofolate + H2O = 2-dehydropantoate + (6S)-5,6,7,8-tetrahydrofolate. It participates in cofactor biosynthesis; (R)-pantothenate biosynthesis; (R)-pantoate from 3-methyl-2-oxobutanoate: step 1/2. Catalyzes the reversible reaction in which hydroxymethyl group from 5,10-methylenetetrahydrofolate is transferred onto alpha-ketoisovalerate to form ketopantoate. The chain is 3-methyl-2-oxobutanoate hydroxymethyltransferase from Prochlorococcus marinus (strain SARG / CCMP1375 / SS120).